Consider the following 241-residue polypeptide: Translation initiation factor IF-3 (241 aa).

A compositionally biased stretch (basic and acidic residues) spans 193-203 (AAEKARQKAIQ). The tract at residues 193–241 (AAEKARQKAIQEGRAAPAQDDTEDEEIEKLERELEEQDDEDDDEAEATE) is disordered. Residues 212–241 (DDTEDEEIEKLERELEEQDDEDDDEAEATE) are compositionally biased toward acidic residues.

Belongs to the IF-3 family. As to quaternary structure, monomer.

The protein localises to the cytoplasm. Its function is as follows. IF-3 binds to the 30S ribosomal subunit and shifts the equilibrium between 70S ribosomes and their 50S and 30S subunits in favor of the free subunits, thus enhancing the availability of 30S subunits on which protein synthesis initiation begins. The chain is Translation initiation factor IF-3 from Sorangium cellulosum (strain So ce56) (Polyangium cellulosum (strain So ce56)).